The sequence spans 537 residues: MAKQIIFGEKVRVSLKKGVDTLANTVRVTLGPKGHPVALERKWGAPTVIDDGVTIARDIELPDAFENMGAQLVKEAATRTSDAAGDGTTTSIVLAQALINEAFKNIAAGAEPINLKRGIEKAVAALKAQLRKNSTPVKGKQQIVQVATITGKDPEIGNLIADVMDKVGKDGVITIEESRGLRYETSYVEGMQFDRGYISAYFVTDPGRMESVMEDATILMTDRKIETVAELLPALEKILQISKNLVIVAENVEAEALATLVVNKLRGNLNILAVKAPGYGDRQKAMLEDMAILTGGHVISKEAGRKLDSVTEADLGHARRIVSNKDKTTIIDGEGSAEAIKDRIKQIKAQIEETESAFDREKLQERQAALVGGVAVIAVGAATETEMKERKARVEDALAATRAAIEEGILPGGGTGLLNALPCLDALKLEGDEATGVNIVRKALIEPVRWIATNAGKDGNVIVDKVKNSPVGHGYNAENDVFGDMAEMGIIDPTMVVRSALENAASIANMVLITDSLVADIQEKAPAAPGPEAAGMY.

ATP-binding positions include 29–32, 86–90, glycine 413, and aspartate 492; these read TLGP and DGTTT.

The protein belongs to the chaperonin (HSP60) family. Forms a cylinder of 14 subunits composed of two heptameric rings stacked back-to-back. Interacts with the co-chaperonin GroES.

It localises to the cytoplasm. It carries out the reaction ATP + H2O + a folded polypeptide = ADP + phosphate + an unfolded polypeptide.. Together with its co-chaperonin GroES, plays an essential role in assisting protein folding. The GroEL-GroES system forms a nano-cage that allows encapsulation of the non-native substrate proteins and provides a physical environment optimized to promote and accelerate protein folding. This is Chaperonin GroEL from Dehalococcoides mccartyi (strain ATCC BAA-2100 / JCM 16839 / KCTC 5957 / BAV1).